The chain runs to 1548 residues: Dual oxidase 2 (1548 aa).

Positions 1–25 are cleaved as a signal peptide; the sequence is MLRARPEALMLLGALLTGSLGPSGN. Residues 26 to 601 are Extracellular-facing; the sequence is QDALSLPWEV…EGSSPGFAIT (576 aa). The interval 30–596 is peroxidase-like; mediates peroxidase activity; that stretch reads SLPWEVQRYD…VLDFFEGSSP (567 aa). 5 N-linked (GlcNAc...) asparagine glycosylation sites follow: asparagine 100, asparagine 348, asparagine 382, asparagine 455, and asparagine 537. Cysteine 124 and cysteine 1162 are oxidised to a cystine. The chain crosses the membrane as a helical span at residues 602 to 622; it reads IIALCCLPLVSLLLSGVVAYF. The Cytoplasmic portion of the chain corresponds to 623 to 1041; the sequence is RGREHKKLQK…KRFVENYRRH (419 aa). EF-hand domains lie at 819 to 854, 855 to 890, and 899 to 934; these read PQDM…FMKG, SPED…FIEI, and QLAE…HDSE. The Ca(2+) site is built by aspartate 832, aspartate 834, asparagine 836, tyrosine 838, glutamate 843, aspartate 868, aspartate 870, asparagine 872, and glutamate 879. The interval 960-1245 is interaction with TXNDC11; that stretch reads ISCRVSFITR…GSYALIQLPT (286 aa). Residues 971 to 991 are disordered; the sequence is PGERSHPQGLGPPAPEAPELG. A helical transmembrane segment spans residues 1042–1062; sequence IVCVAIFSAICVGVFADRAYY. Residues 1063–1076 lie on the Extracellular side of the membrane; sequence YGFASPPSDIAQTT. A helical membrane pass occupies residues 1077-1097; it reads LVGIILSRGTAASVSFMFSYI. Positions 1084-1266 constitute a Ferric oxidoreductase domain; it reads RGTAASVSFM…YGGDKLVSLS (183 aa). The Cytoplasmic segment spans residues 1098–1128; the sequence is LLTMCRNLITFLRETFLNRYVPFDAAVDFHR. Residues 1129–1151 traverse the membrane as a helical segment; that stretch reads WIAMAAVVLAILHSAGHAVNVYI. Residues 1152–1185 are Extracellular-facing; sequence FSVSPLSLLACIFPNVFVNDGSKLPQKFYWWFFQ. The helical transmembrane segment at 1186-1206 threads the bilayer; that stretch reads TVPGMTGVLLLLVLAIMYVFA. Residues 1207 to 1223 are Cytoplasmic-facing; sequence SHHFRRRSFRGFWLTHH. 2 helical membrane-spanning segments follow: residues 1224–1244 and 1245–1265; these read LYIL…IQLP and TFHI…LVSL. The Cytoplasmic segment spans residues 1266–1548; that stretch reads SRKKVEISVV…AHFMHHYENF (283 aa). Residues 1267–1373 enclose the FAD-binding FR-type domain; sequence RKKVEISVVK…DGPFGEGHQE (107 aa).

The protein in the N-terminal section; belongs to the peroxidase family. Heterodimer with DUOXA2; disulfide-linked. Interacts with TXNDC11, TPO and CYBA. Post-translationally, N-glycosylated. As to expression, expressed in colon, small intestine, duodenum and tracheal surface epithelial cells (at protein level). Expressed in thyrocytes. Also detected in kidney, liver, lung, pancreas, prostate, salivary glands, rectum and testis.

The protein localises to the apical cell membrane. It localises to the cell junction. It carries out the reaction NADH + O2 + H(+) = H2O2 + NAD(+). The enzyme catalyses NADPH + O2 + H(+) = H2O2 + NADP(+). Its pathway is hormone biosynthesis; thyroid hormone biosynthesis. Its activity is regulated as follows. Peroxidase activity is inhibited by aminobenzohydrazide. The NADPH oxidase activity is calcium-dependent. In terms of biological role, generates hydrogen peroxide which is required for the activity of thyroid peroxidase/TPO and lactoperoxidase/LPO. Plays a role in thyroid hormones synthesis and lactoperoxidase-mediated antimicrobial defense at the surface of mucosa. May have its own peroxidase activity through its N-terminal peroxidase-like domain. The chain is Dual oxidase 2 (DUOX2) from Homo sapiens (Human).